Here is a 265-residue protein sequence, read N- to C-terminus: Methyl-coenzyme M reductase II subunit gamma (265 aa).

Arg-123 lines the coenzyme M pocket.

It belongs to the methyl-coenzyme M reductase gamma subunit family. In terms of assembly, MCR is a hexamer of two alpha, two beta, and two gamma chains, forming a dimer of heterotrimers. Coenzyme F430 serves as cofactor.

The catalysed reaction is coenzyme B + methyl-coenzyme M = methane + coenzyme M-coenzyme B heterodisulfide. The protein operates within one-carbon metabolism; methyl-coenzyme M reduction; methane from methyl-coenzyme M: step 1/1. Its function is as follows. Component of the methyl-coenzyme M reductase (MCR) I that catalyzes the reductive cleavage of methyl-coenzyme M (CoM-S-CH3 or 2-(methylthio)ethanesulfonate) using coenzyme B (CoB or 7-mercaptoheptanoylthreonine phosphate) as reductant which results in the production of methane and the mixed heterodisulfide of CoB and CoM (CoM-S-S-CoB). This is the final step in methanogenesis. This chain is Methyl-coenzyme M reductase II subunit gamma (mrtG), found in Methanothermobacter marburgensis (strain ATCC BAA-927 / DSM 2133 / JCM 14651 / NBRC 100331 / OCM 82 / Marburg) (Methanobacterium thermoautotrophicum).